Consider the following 201-residue polypeptide: Cell division protein SepF (201 aa).

Residues 27–38 show a composition bias toward basic and acidic residues; the sequence is VQERTSVQRDSR. Residues 27–99 form a disordered region; that stretch reads VQERTSVQRD…PRVQNKDSVR (73 aa). A compositionally biased stretch (polar residues) spans 43-54; that stretch reads QEASQRSHMTNS. The span at 72-81 shows a compositional bias: basic and acidic residues; that stretch reads NRQERQRVQR. Residues 83 to 92 are compositionally biased toward polar residues; the sequence is NAYQQATPRV.

The protein belongs to the SepF family. Homodimer. Interacts with FtsZ.

Its subcellular location is the cytoplasm. Cell division protein that is part of the divisome complex and is recruited early to the Z-ring. Probably stimulates Z-ring formation, perhaps through the cross-linking of FtsZ protofilaments. Its function overlaps with FtsA. The polypeptide is Cell division protein SepF (Streptococcus agalactiae serotype V (strain ATCC BAA-611 / 2603 V/R)).